A 339-amino-acid polypeptide reads, in one-letter code: Ketol-acid reductoisomerase (NADP(+)) (339 aa).

The region spanning 1–182 is the KARI N-terminal Rossmann domain; sequence MRVYYDRDAD…GGGRSGIIET (182 aa). Residues 24-27, Arg-48, Ser-51, Thr-53, and 83-86 contribute to the NADP(+) site; these read YGSQ and DEHQ. Residue His-108 is part of the active site. Residue Gly-134 participates in NADP(+) binding. In terms of domain architecture, KARI C-terminal knotted spans 183-328; sequence NFREECETDL…ARLRGMMPWI (146 aa). Residues Asp-191, Glu-195, Glu-227, and Glu-231 each coordinate Mg(2+). Ser-252 contributes to the substrate binding site.

The protein belongs to the ketol-acid reductoisomerase family. The cofactor is Mg(2+).

The enzyme catalyses (2R)-2,3-dihydroxy-3-methylbutanoate + NADP(+) = (2S)-2-acetolactate + NADPH + H(+). It carries out the reaction (2R,3R)-2,3-dihydroxy-3-methylpentanoate + NADP(+) = (S)-2-ethyl-2-hydroxy-3-oxobutanoate + NADPH + H(+). Its pathway is amino-acid biosynthesis; L-isoleucine biosynthesis; L-isoleucine from 2-oxobutanoate: step 2/4. It participates in amino-acid biosynthesis; L-valine biosynthesis; L-valine from pyruvate: step 2/4. In terms of biological role, involved in the biosynthesis of branched-chain amino acids (BCAA). Catalyzes an alkyl-migration followed by a ketol-acid reduction of (S)-2-acetolactate (S2AL) to yield (R)-2,3-dihydroxy-isovalerate. In the isomerase reaction, S2AL is rearranged via a Mg-dependent methyl migration to produce 3-hydroxy-3-methyl-2-ketobutyrate (HMKB). In the reductase reaction, this 2-ketoacid undergoes a metal-dependent reduction by NADPH to yield (R)-2,3-dihydroxy-isovalerate. In Caulobacter sp. (strain K31), this protein is Ketol-acid reductoisomerase (NADP(+)).